Reading from the N-terminus, the 428-residue chain is UPF0229 protein YeaH (428 aa).

Over residues 77–90 the composition is skewed to basic and acidic residues; the sequence is PGNDHFIQNDRIER. The disordered stretch occupies residues 77 to 111; it reads PGNDHFIQNDRIERPQSGGGGGSGSGQGQASQDGE. Positions 93-103 are enriched in gly residues; sequence SGGGGGSGSGQ.

It belongs to the UPF0229 family.

This chain is UPF0229 protein YeaH, found in Salmonella typhi.